Reading from the N-terminus, the 132-residue chain is Phosphoribosyl-AMP cyclohydrolase (132 aa).

Aspartate 79 lines the Mg(2+) pocket. Cysteine 80 is a binding site for Zn(2+). Residues aspartate 81 and aspartate 83 each contribute to the Mg(2+) site. Cysteine 100 and cysteine 107 together coordinate Zn(2+).

Belongs to the PRA-CH family. In terms of assembly, homodimer. The cofactor is Mg(2+). It depends on Zn(2+) as a cofactor.

It is found in the cytoplasm. The enzyme catalyses 1-(5-phospho-beta-D-ribosyl)-5'-AMP + H2O = 1-(5-phospho-beta-D-ribosyl)-5-[(5-phospho-beta-D-ribosylamino)methylideneamino]imidazole-4-carboxamide. It functions in the pathway amino-acid biosynthesis; L-histidine biosynthesis; L-histidine from 5-phospho-alpha-D-ribose 1-diphosphate: step 3/9. Its function is as follows. Catalyzes the hydrolysis of the adenine ring of phosphoribosyl-AMP. The protein is Phosphoribosyl-AMP cyclohydrolase of Acidovorax sp. (strain JS42).